The following is a 260-amino-acid chain: Histone H2A.v1 (260 aa).

Disordered regions lie at residues 65-122 and 236-260; these read VVQT…KQKS and KKKG…SSKN. The segment covering 67 to 110 has biased composition (low complexity); sequence QTNNKTNNKNNINNNNNNNNNNNNNNINNNNKNNKVKKTTTTTK. Composition is skewed to basic and acidic residues over residues 111-121 and 248-260; these read KNNEKSNEKQK and DISK…SSKN.

This sequence belongs to the histone H2A family.

This Dictyostelium discoideum (Social amoeba) protein is Histone H2A.v1 (H2Av1).